The following is a 236-amino-acid chain: Phosphoribosylaminoimidazole-succinocarboxamide synthase (236 aa).

Belongs to the SAICAR synthetase family.

The enzyme catalyses 5-amino-1-(5-phospho-D-ribosyl)imidazole-4-carboxylate + L-aspartate + ATP = (2S)-2-[5-amino-1-(5-phospho-beta-D-ribosyl)imidazole-4-carboxamido]succinate + ADP + phosphate + 2 H(+). It functions in the pathway purine metabolism; IMP biosynthesis via de novo pathway; 5-amino-1-(5-phospho-D-ribosyl)imidazole-4-carboxamide from 5-amino-1-(5-phospho-D-ribosyl)imidazole-4-carboxylate: step 1/2. The sequence is that of Phosphoribosylaminoimidazole-succinocarboxamide synthase from Pseudomonas entomophila (strain L48).